We begin with the raw amino-acid sequence, 310 residues long: uncharacterized protein (310 aa).

2 disordered regions span residues leucine 22–histidine 163 and glutamate 178–aspartate 209. Basic and acidic residues-rich tracts occupy residues isoleucine 56–proline 66 and threonine 183–alanine 197. Low complexity predominate over residues alanine 198 to aspartate 209. 3 helical membrane passes run alanine 231 to phenylalanine 251, tryptophan 257 to valine 277, and isoleucine 286 to leucine 306.

This sequence to M.leprae ML2433.

Its subcellular location is the cell membrane. This is an uncharacterized protein from Mycobacterium tuberculosis (strain CDC 1551 / Oshkosh).